Consider the following 573-residue polypeptide: SHC-transforming protein 2 (573 aa).

One can recognise a PID domain in the interval 125-309 (LGPGVSYIVR…LEELAWGDDD (185 aa)). The segment at 310–477 (AAADHNYYNS…PTEEQLRQEP (168 aa)) is CH1. Tyr-316, Tyr-317, and Tyr-395 each carry phosphotyrosine. Residues 478-569 (WYHGRMSRRA…ESELHLRGVV (92 aa)) enclose the SH2 domain.

In terms of assembly, interacts with the Trk receptors in a phosphotyrosine-dependent manner and MEGF12. Once activated, binds to GRB2. Post-translationally, phosphorylated on tyrosine by the Trk receptors. As to expression, expressed in brain. Expressed at high level in the hypothalamus and at low level in the caudate nucleus.

Its function is as follows. Signaling adapter that couples activated growth factor receptors to signaling pathway in neurons. Involved in the signal transduction pathways of neurotrophin-activated Trk receptors in cortical neurons. This is SHC-transforming protein 2 (Shc2) from Mus musculus (Mouse).